The sequence spans 497 residues: Galactose/methyl galactoside import ATP-binding protein MglA (497 aa).

2 ABC transporter domains span residues 6–241 (LEIK…VGRS) and 252–497 (VPGE…AKYL). 38-45 (GENGAGKS) provides a ligand contact to ATP.

This sequence belongs to the ABC transporter superfamily. Galactose/methyl galactoside importer (TC 3.A.1.2.3) family. In terms of assembly, the complex is composed of one ATP-binding protein (MglA), two transmembrane proteins (MglC) and a solute-binding protein (MglB).

The protein resides in the cell inner membrane. The catalysed reaction is D-galactose(out) + ATP + H2O = D-galactose(in) + ADP + phosphate + H(+). It catalyses the reaction methyl beta-D-galactoside(out) + ATP + H2O = methyl beta-D-galactoside(in) + ADP + phosphate + H(+). In terms of biological role, part of the ABC transporter complex MglABC involved in galactose/methyl galactoside import. Responsible for energy coupling to the transport system. The protein is Galactose/methyl galactoside import ATP-binding protein MglA of Treponema denticola (strain ATCC 35405 / DSM 14222 / CIP 103919 / JCM 8153 / KCTC 15104).